A 326-amino-acid chain; its full sequence is NDRG-like protein (326 aa).

Belongs to the NDRG family.

This is NDRG-like protein from Dictyostelium discoideum (Social amoeba).